A 307-amino-acid chain; its full sequence is Ubiquitin recognition factor in ER-associated degradation protein 1 (307 aa).

M1 is modified (N-acetylmethionine). Phosphoserine is present on residues S129, S231, S245, S247, and S299. 2 disordered regions span residues 231–256 (SGNR…DIKR) and 288–307 (GRFV…GRKP).

The protein belongs to the UFD1 family. In terms of assembly, heterodimer with NPLOC4, this heterodimer binds VCP and inhibits Golgi membrane fusion. Interacts with USP13. Interacts with ZFAND2B; probably through VCP. Found in adult heart, skeletal muscle and pancreas, and in fetal liver and kidney.

Its subcellular location is the nucleus. It is found in the cytoplasm. The protein resides in the cytosol. It functions in the pathway protein degradation; proteasomal ubiquitin-dependent pathway. Functionally, essential component of the ubiquitin-dependent proteolytic pathway which degrades ubiquitin fusion proteins. The ternary complex containing UFD1, VCP and NPLOC4 binds ubiquitinated proteins and is necessary for the export of misfolded proteins from the ER to the cytoplasm, where they are degraded by the proteasome. The NPLOC4-UFD1-VCP complex regulates spindle disassembly at the end of mitosis and is necessary for the formation of a closed nuclear envelope. It may be involved in the development of some ectoderm-derived structures. Acts as a negative regulator of type I interferon production via the complex formed with VCP and NPLOC4, which binds to RIGI and recruits RNF125 to promote ubiquitination and degradation of RIGI. The polypeptide is Ubiquitin recognition factor in ER-associated degradation protein 1 (Homo sapiens (Human)).